The primary structure comprises 631 residues: Phosphomethylpyrimidine synthase (631 aa).

Substrate-binding positions include Asn-239, Met-268, Tyr-297, His-333, 353-355 (SRG), 394-397 (DGLR), and Glu-433. Position 437 (His-437) interacts with Zn(2+). Tyr-460 contributes to the substrate binding site. His-501 is a Zn(2+) binding site. Residues Cys-581, Cys-584, and Cys-589 each contribute to the [4Fe-4S] cluster site.

The protein belongs to the ThiC family. As to quaternary structure, homodimer. [4Fe-4S] cluster is required as a cofactor.

The enzyme catalyses 5-amino-1-(5-phospho-beta-D-ribosyl)imidazole + S-adenosyl-L-methionine = 4-amino-2-methyl-5-(phosphooxymethyl)pyrimidine + CO + 5'-deoxyadenosine + formate + L-methionine + 3 H(+). Its pathway is cofactor biosynthesis; thiamine diphosphate biosynthesis. In terms of biological role, catalyzes the synthesis of the hydroxymethylpyrimidine phosphate (HMP-P) moiety of thiamine from aminoimidazole ribotide (AIR) in a radical S-adenosyl-L-methionine (SAM)-dependent reaction. The chain is Phosphomethylpyrimidine synthase from Escherichia coli O81 (strain ED1a).